Here is a 334-residue protein sequence, read N- to C-terminus: Phosphoribosylformylglycinamidine cyclo-ligase (334 aa).

The protein belongs to the AIR synthase family.

Its subcellular location is the cytoplasm. It catalyses the reaction 2-formamido-N(1)-(5-O-phospho-beta-D-ribosyl)acetamidine + ATP = 5-amino-1-(5-phospho-beta-D-ribosyl)imidazole + ADP + phosphate + H(+). Its pathway is purine metabolism; IMP biosynthesis via de novo pathway; 5-amino-1-(5-phospho-D-ribosyl)imidazole from N(2)-formyl-N(1)-(5-phospho-D-ribosyl)glycinamide: step 2/2. The protein is Phosphoribosylformylglycinamidine cyclo-ligase of Pyrococcus furiosus (strain ATCC 43587 / DSM 3638 / JCM 8422 / Vc1).